The following is an 800-amino-acid chain: uncharacterized protein (800 aa).

Residues 1–21 (MNRFFISTLLLLAQHLAPAAA) form the signal peptide. The span at 63–72 (SLSTGSPVEI) shows a compositional bias: polar residues. Disordered regions lie at residues 63 to 470 (SLST…PLTT), 602 to 670 (TPIT…SSTS), and 710 to 776 (SSLS…TPSS). Composition is skewed to low complexity over residues 73 to 314 (TSTS…SSTS), 321 to 368 (STSS…SSTS), 375 to 444 (STSS…TSTP), and 451 to 470 (TTSTSVPYTSTPVTSTPLTT). The span at 710–720 (SSLSSIPNNST) shows a compositional bias: low complexity. Polar residues predominate over residues 721–734 (EVKTASTSSGTEIK). Positions 735-776 (TASTSSGSSSSSSYTPASSTSTTTSSVSSRQSSSSSSFTPSS) are enriched in low complexity.

Its subcellular location is the secreted. The protein localises to the cell surface. This is an uncharacterized protein from Schizosaccharomyces pombe (strain 972 / ATCC 24843) (Fission yeast).